Here is a 411-residue protein sequence, read N- to C-terminus: S-inosyl-L-homocysteine hydrolase (411 aa).

Substrate is bound by residues aspartate 121 and glutamate 146. 147–149 (TTT) provides a ligand contact to NAD(+). The substrate site is built by lysine 176 and aspartate 180. NAD(+) is bound by residues asparagine 181, 210-215 (GYGWCG), glutamate 233, asparagine 268, 289-291 (SGH), and asparagine 335.

Belongs to the adenosylhomocysteinase family. It depends on NAD(+) as a cofactor.

It is found in the cytoplasm. The enzyme catalyses S-inosyl-L-homocysteine + H2O = L-homocysteine + inosine. Its pathway is amino-acid biosynthesis; S-adenosyl-L-methionine biosynthesis. Functionally, catalyzes the hydrolysis of S-inosyl-L-homocysteine (SIH) to L-homocysteine (Hcy) and inosine. Likely functions in a S-adenosyl-L-methionine (SAM) recycling pathway from S-adenosyl-L-homocysteine (SAH) produced from SAM-dependent methylation reactions. Can also catalyze the reverse reaction in vitro, i.e. the synthesis of SIH from Hcy and inosine. This is S-inosyl-L-homocysteine hydrolase from Methanosarcina mazei (strain ATCC BAA-159 / DSM 3647 / Goe1 / Go1 / JCM 11833 / OCM 88) (Methanosarcina frisia).